Reading from the N-terminus, the 255-residue chain is F-box/SPRY domain-containing protein 1 (255 aa).

An F-box domain is found at 3–51 (DPVAALCNFNVLEVIFSYLDLNDLSRCSQVCRSWHHFLNDENSDVWRWH). The B30.2/SPRY domain occupies 61-253 (MKSDLLTSVS…VSMVYLGTPL (193 aa)).

This sequence belongs to the FBXO45/Fsn family. Component of an E3 ubiquitin ligase complex composed of hiw and Fsn.

It localises to the synapse. It participates in protein modification; protein ubiquitination. Required in the presynaptic motoneuron to down-regulate the levels of wnd and restrain synaptic terminal growth at the neuromuscular junction (NMJ). The protein is F-box/SPRY domain-containing protein 1 of Drosophila willistoni (Fruit fly).